Consider the following 628-residue polypeptide: tRNA(Thr) (cytosine(32)-N(3))-methyltransferase (628 aa).

A compositionally biased stretch (basic and acidic residues) spans M1–G18. 3 disordered regions span residues M1–A106, A124–L269, and N302–S331. Polar residues predominate over residues V22–L31. Basic and acidic residues predominate over residues K32–Q42. Positions D53 to P62 are enriched in acidic residues. S93 carries the phosphoserine modification. The span at E132 to E146 shows a compositional bias: acidic residues. Residue T150 is modified to Phosphothreonine. A compositionally biased stretch (acidic residues) spans P173–I186. The segment covering N196–G207 has biased composition (polar residues). A compositionally biased stretch (basic residues) spans K215 to N230. A compositionally biased stretch (polar residues) spans G231–D240. Phosphoserine is present on residues S321 and S326. T347 is modified (phosphothreonine). Residues W399, Y403, G441, D466, D492, L493, and I515 each contribute to the S-adenosyl-L-methionine site.

Belongs to the methyltransferase superfamily. METL family. As to quaternary structure, interacts with SES1.

The protein localises to the cytoplasm. The protein resides in the cytoskeleton. It carries out the reaction cytidine(32) in tRNA(Thr) + S-adenosyl-L-methionine = N(3)-methylcytidine(32) in tRNA(Thr) + S-adenosyl-L-homocysteine + H(+). The enzyme catalyses cytidine(32) in tRNA(Ser) + S-adenosyl-L-methionine = N(3)-methylcytidine(32) in tRNA(Ser) + S-adenosyl-L-homocysteine + H(+). Its function is as follows. S-adenosyl-L-methionine-dependent methyltransferase that mediates N(3)-methylcytidine modification of residue 32 of the tRNA anticodon loop of tRNA(Thr) and tRNA(Ser). N(3)-methylcytidine methylation of tRNA(Thr) requires the N6-threonylcarbamoylation of tRNA (t6A37) by the EKC/KEOPS complex as prerequisite. N(3)-methylcytidine methylation of tRNA(Ser) requires the formation of N(6)-dimethylallyladenosine(37) (i6A37) by MOD5 as prerequisite. Methylation of tRNA(Ser) is also stimulated by SES1. Binds F-actin and shows weak F-actin cross-linking activity. The polypeptide is tRNA(Thr) (cytosine(32)-N(3))-methyltransferase (ABP140) (Saccharomyces cerevisiae (strain ATCC 204508 / S288c) (Baker's yeast)).